Here is a 262-residue protein sequence, read N- to C-terminus: Bacteriorhodopsin (262 aa).

The propeptide occupies 1–13 (MLELLPTAVEGVS). Residue Gln-14 is modified to Pyrrolidone carboxylic acid. Residues 14-22 (QAQITGRPE) are Extracellular-facing. Residues 23–42 (WIWLALGTALMGLGTLYFLV) form a helical membrane-spanning segment. Residues 43-56 (KGMGVSDPDAKKFY) lie on the Cytoplasmic side of the membrane. Residues 57–75 (AITTLVPAIAFTMYLSMLL) traverse the membrane as a helical segment. Topologically, residues 76–92 (GYGLTMVPFGGEQNPIY) are extracellular. Residues 93-109 (WARYADWLFTTPLLLLD) traverse the membrane as a helical segment. The Cytoplasmic portion of the chain corresponds to 110 to 120 (LALLVDADQGT). The helical transmembrane segment at 121-140 (ILALVGADGIMIGTGLVGAL) threads the bilayer. Residues 141 to 147 (TKVYSYR) are Extracellular-facing. A helical transmembrane segment spans residues 148–167 (FVWWAISTAAMLYILYVLFF). Topologically, residues 168-185 (GFTSKAESMRPEVASTFK) are cytoplasmic. The chain crosses the membrane as a helical span at residues 186–204 (VLRNVTVVLWSAYPVVWLI). Residues 205 to 216 (GSEGAGIVPLNI) lie on the Extracellular side of the membrane. The chain crosses the membrane as a helical span at residues 217–236 (ETLLFMVLDVSAKVGFGLIL). Lys-229 bears the N6-(retinylidene)lysine mark. The Cytoplasmic portion of the chain corresponds to 237 to 262 (LRSRAIFGEAEAPEPSAGDGAAATSD).

In terms of assembly, homotrimer. The covalent binding of retinal to the apoprotein, bacterioopsin, generates bacteriorhodopsin.

Its subcellular location is the cell membrane. Functionally, light-driven proton pump. This is Bacteriorhodopsin (bop) from Halobacterium salinarum (strain ATCC 700922 / JCM 11081 / NRC-1) (Halobacterium halobium).